The following is a 142-amino-acid chain: HTH-type transcriptional repressor NsrR (142 aa).

One can recognise an HTH rrf2-type domain in the interval 2-129 (QLTSFTDYGL…DRHTLAELVE (128 aa)). A DNA-binding region (H-T-H motif) is located at residues 28–51 (ITEVTQVYGVSRNHMVKIINQLSH). 3 residues coordinate [2Fe-2S] cluster: Cys91, Cys96, and Cys102.

The cofactor is [2Fe-2S] cluster.

Its function is as follows. Nitric oxide-sensitive repressor of genes involved in protecting the cell against nitrosative stress. May require iron for activity. In Proteus mirabilis (strain HI4320), this protein is HTH-type transcriptional repressor NsrR.